The sequence spans 249 residues: MEAAADGPAETRSRVEKDSRRAIKDSPAKTQSPAQDTSIMLRNNADTGKVPALPEHKKKRKGYSPAESVKILRDWMYKHRFRAYPSEAEKRMLSKKTNLSLSQISNWFINARRRILPDMLQRRGNDPIVGHKTGKDAHATHLRSTDASVPAKSGPRGSDNVQSLPLRSSPKGQMSGEKIPEPGSAPSQKLTMIAQPKKKVKVSNITSLSSPEPVSTEEYADFSSFQLLVDAAVQRAAELELEKKQESNP.

Disordered regions lie at residues 1–65 and 126–199; these read MEAA…GYSP and DPIV…PKKK. Over residues 9-27 the composition is skewed to basic and acidic residues; sequence AETRSRVEKDSRRAIKDSP. Positions 28 to 46 are enriched in polar residues; it reads AKTQSPAQDTSIMLRNNAD. Residues 55–118 constitute a DNA-binding region (homeobox; TALE-type); sequence EHKKKRKGYS…INARRRILPD (64 aa). The segment covering 159 to 172 has biased composition (polar residues); it reads DNVQSLPLRSSPKG.

The protein belongs to the TALE/TGIF homeobox family.

Its subcellular location is the nucleus. Functionally, may have a transcription role in testis. The sequence is that of Homeobox protein TGIF2LX (TGIF2LX) from Macaca mulatta (Rhesus macaque).